Here is a 286-residue protein sequence, read N- to C-terminus: MSSNTFTLGTKSVNRLGYGAMQLAGPGVFGPPRDRHVAITVLREALALGVNHIDTSDFYGPHVTNQIIREALYPYSDDLTIVTKIGARRGEDASWLPAFSPAELQKAVHDNLRNLGLDVLDVVNLRVMMGDGHGPAEGSIEASLTVLAEMQQQGLVKHIGLSNVTPTQVAEARKIAEIVCVQNEYNIAHRADDAMIDALAHDGIAYVPFFPLGGFTPLQSSTLSDVAASLGATPMQVALAWLLQRSPNILLIPGTSSVAHLRENMAAEKLHLSEEVLSTLDGISRE.

Tyr59 serves as the catalytic Proton donor. Residue 210-218 participates in NADP(+) binding; the sequence is FPLGGFTPL.

The protein belongs to the aldo/keto reductase family. Aldo/keto reductase 2 subfamily.

The catalysed reaction is pyridoxine + NADP(+) = pyridoxal + NADPH + H(+). It catalyses the reaction pyridoxine + NAD(+) = pyridoxal + NADH + H(+). In terms of biological role, catalyzes the NAD(P)H-dependent reduction of pyridoxal to pyridoxine in vitro. Is not able to reduce 4-pyridoxate, and to oxidize pyridoxine or pyridoxamine. Has Kemp eliminase activity towards the non-physiological substrate 5-nitrobenzisoxazole, producing 4-nitro-2-cyanophenol; this activity is not considered to be physiologically relevant. The sequence is that of Pyridoxine 4-dehydrogenase from Escherichia coli (strain K12).